Consider the following 180-residue polypeptide: tRNA (cytidine(56)-2'-O)-methyltransferase (180 aa).

S-adenosyl-L-methionine-binding positions include L83, 115–119 (GAEKV), and 133–140 (VGNQPHSE).

The protein belongs to the aTrm56 family. As to quaternary structure, homodimer.

The protein localises to the cytoplasm. It catalyses the reaction cytidine(56) in tRNA + S-adenosyl-L-methionine = 2'-O-methylcytidine(56) in tRNA + S-adenosyl-L-homocysteine + H(+). In terms of biological role, specifically catalyzes the AdoMet-dependent 2'-O-ribose methylation of cytidine at position 56 in tRNAs. The protein is tRNA (cytidine(56)-2'-O)-methyltransferase of Methanococcus aeolicus (strain ATCC BAA-1280 / DSM 17508 / OCM 812 / Nankai-3).